The chain runs to 429 residues: Bifunctional phosphoribosylaminoimidazole carboxylase/phosphoribosylaminoimidazole succinocarboxamide synthetase (429 aa).

The SAICAR synthetase stretch occupies residues 7 to 264 (ASIEGYKLGK…WVAEQLADIV (258 aa)). An SAICAR synthetase domain region spans residues 7–264 (ASIEGYKLGK…WVAEQLADIV (258 aa)). The interval 265 to 429 (PKKDHLVVIL…DKELRGVRNA (165 aa)) is AIR carboxylase. The interval 270 to 429 (LVVILMGSAS…DKELRGVRNA (160 aa)) is AIR carboxylase domain. Residue Ser-335 coordinates CO2.

The protein in the N-terminal section; belongs to the SAICAR synthetase family. In the C-terminal section; belongs to the AIR carboxylase family. Class II subfamily. As to quaternary structure, homooctamer.

It catalyses the reaction 5-amino-1-(5-phospho-D-ribosyl)imidazole-4-carboxylate + L-aspartate + ATP = (2S)-2-[5-amino-1-(5-phospho-beta-D-ribosyl)imidazole-4-carboxamido]succinate + ADP + phosphate + 2 H(+). It carries out the reaction 5-amino-1-(5-phospho-D-ribosyl)imidazole-4-carboxylate + H(+) = 5-amino-1-(5-phospho-beta-D-ribosyl)imidazole + CO2. It functions in the pathway purine metabolism; IMP biosynthesis via de novo pathway; 5-amino-1-(5-phospho-D-ribosyl)imidazole-4-carboxamide from 5-amino-1-(5-phospho-D-ribosyl)imidazole-4-carboxylate: step 1/2. The protein operates within purine metabolism; IMP biosynthesis via de novo pathway; 5-amino-1-(5-phospho-D-ribosyl)imidazole-4-carboxylate from 5-amino-1-(5-phospho-D-ribosyl)imidazole (carboxylase route): step 1/1. Its function is as follows. Bifunctional phosphoribosylaminoimidazole carboxylase and phosphoribosylaminoimidazole succinocarboxamide synthetase catalyzing two reactions of the de novo purine biosynthetic pathway. This is Bifunctional phosphoribosylaminoimidazole carboxylase/phosphoribosylaminoimidazole succinocarboxamide synthetase from Drosophila melanogaster (Fruit fly).